Consider the following 1051-residue polypeptide: Carbamoyl phosphate synthase large chain (1051 aa).

Residues 1–399 (MKETPKKVLV…SLQKAVRMLD (399 aa)) are carboxyphosphate synthetic domain. Positions 127, 167, 173, 174, 206, 208, 213, 239, 240, 241, 282, and 296 each coordinate ATP. Residues 131-325 (RETMIENNLP…LAYVSAKLAL (195 aa)) form the ATP-grasp 1 domain. Residues Gln-282, Glu-296, and Asn-298 each coordinate Mg(2+). Mn(2+) is bound by residues Gln-282, Glu-296, and Asn-298. Positions 400 to 548 (IGEPGVVGGK…LTYNGTEDDL (149 aa)) are oligomerization domain. Residues 549-930 (EFSQGNKLLI…LKSWLSSIPN (382 aa)) form a carbamoyl phosphate synthetic domain region. In terms of domain architecture, ATP-grasp 2 spans 673 to 863 (SKLLDKLGIS…LINESMKAIF (191 aa)). Residues Arg-709, Lys-748, Ile-750, Glu-755, Gly-779, Val-780, His-781, Ser-782, Gln-822, and Glu-834 each contribute to the ATP site. Gln-822, Glu-834, and Asn-836 together coordinate Mg(2+). Positions 822, 834, and 836 each coordinate Mn(2+). The MGS-like domain maps to 930–1051 (NRIPNKNGIA…FEISEYGGGI (122 aa)). The tract at residues 931–1051 (RIPNKNGIAL…FEISEYGGGI (121 aa)) is allosteric domain.

Belongs to the CarB family. As to quaternary structure, composed of two chains; the small (or glutamine) chain promotes the hydrolysis of glutamine to ammonia, which is used by the large (or ammonia) chain to synthesize carbamoyl phosphate. Tetramer of heterodimers (alpha,beta)4. Mg(2+) serves as cofactor. Mn(2+) is required as a cofactor.

The catalysed reaction is hydrogencarbonate + L-glutamine + 2 ATP + H2O = carbamoyl phosphate + L-glutamate + 2 ADP + phosphate + 2 H(+). It catalyses the reaction hydrogencarbonate + NH4(+) + 2 ATP = carbamoyl phosphate + 2 ADP + phosphate + 2 H(+). It participates in amino-acid biosynthesis; L-arginine biosynthesis; carbamoyl phosphate from bicarbonate: step 1/1. The protein operates within pyrimidine metabolism; UMP biosynthesis via de novo pathway; (S)-dihydroorotate from bicarbonate: step 1/3. In terms of biological role, large subunit of the glutamine-dependent carbamoyl phosphate synthetase (CPSase). CPSase catalyzes the formation of carbamoyl phosphate from the ammonia moiety of glutamine, carbonate, and phosphate donated by ATP, constituting the first step of 2 biosynthetic pathways, one leading to arginine and/or urea and the other to pyrimidine nucleotides. The large subunit (synthetase) binds the substrates ammonia (free or transferred from glutamine from the small subunit), hydrogencarbonate and ATP and carries out an ATP-coupled ligase reaction, activating hydrogencarbonate by forming carboxy phosphate which reacts with ammonia to form carbamoyl phosphate. This is Carbamoyl phosphate synthase large chain from Saccharolobus islandicus (strain M.16.27) (Sulfolobus islandicus).